Reading from the N-terminus, the 194-residue chain is Potassium-transporting ATPase KdpC subunit (194 aa).

The chain crosses the membrane as a helical span at residues leucine 12 to phenylalanine 34.

This sequence belongs to the KdpC family. In terms of assembly, the system is composed of three essential subunits: KdpA, KdpB and KdpC.

The protein localises to the cell inner membrane. Part of the high-affinity ATP-driven potassium transport (or Kdp) system, which catalyzes the hydrolysis of ATP coupled with the electrogenic transport of potassium into the cytoplasm. This subunit acts as a catalytic chaperone that increases the ATP-binding affinity of the ATP-hydrolyzing subunit KdpB by the formation of a transient KdpB/KdpC/ATP ternary complex. In Salmonella heidelberg (strain SL476), this protein is Potassium-transporting ATPase KdpC subunit.